The following is a 195-amino-acid chain: Protein hunchback (195 aa).

Disordered regions lie at residues 16 to 57, 64 to 83, and 155 to 195; these read SHHH…SHTN, LKQQQQQQQQHQHQQQQQPM, and LTPP…KYMA. The segment covering 17–29 has biased composition (basic residues); the sequence is HHHHHHHAHHSHH. Composition is skewed to low complexity over residues 33–44 and 66–81; these read SNSNSNASSPHQ and QQQQQQQQHQHQQQQQ. The span at 176–195 shows a compositional bias: basic and acidic residues; it reads EPEKEHDLMSNSSEDMKYMA.

It belongs to the hunchback C2H2-type zinc-finger protein family.

It is found in the nucleus. Gap class segmentation protein that controls development of head structures. The polypeptide is Protein hunchback (hb) (Drosophila dasycnemia (Fruit fly)).